Here is a 117-residue protein sequence, read N- to C-terminus: Large ribosomal subunit protein bL19 (117 aa).

The protein belongs to the bacterial ribosomal protein bL19 family.

Its function is as follows. This protein is located at the 30S-50S ribosomal subunit interface and may play a role in the structure and function of the aminoacyl-tRNA binding site. The polypeptide is Large ribosomal subunit protein bL19 (Kineococcus radiotolerans (strain ATCC BAA-149 / DSM 14245 / SRS30216)).